The following is a 415-amino-acid chain: Fructose-like permease IIC component (415 aa).

The Cytoplasmic segment spans residues 1–46; the sequence is MAIKKRSATVVHGASGAAAAVKNPQASKSSFWGELPQHVMSGISRM. The PTS EIIC type-2 domain occupies 35 to 415; it reads LPQHVMSGIS…RKGKLLIESL (381 aa). The helical transmembrane segment at 47-67 threads the bilayer; that stretch reads VPTLIMGGVILAFSQLIAYSW. Residues 68-101 are Periplasmic-facing; it reads LKIPADIGIMDALNSGKFSGFDLSLLKFAWLSQS. A helical membrane pass occupies residues 102 to 122; the sequence is FGGVLFGFAIPMFAAFVANSI. The Cytoplasmic portion of the chain corresponds to 123–126; that stretch reads GGKL. Residues 127–147 form a helical membrane-spanning segment; that stretch reads AFPAGFIGGLMSTQPTQLLNF. Residues 148 to 157 lie on the Periplasmic side of the membrane; sequence DPSTMQWATS. Residues 158 to 178 form a helical membrane-spanning segment; it reads SPVPSTFIGALIISIVAGYLV. Over 179–197 the chain is Cytoplasmic; the sequence is KWMNQKIQLPDFLLAFKTT. A helical membrane pass occupies residues 198–218; the sequence is FLLPILSAIFVMLAMYYVITP. Topologically, residues 219–237 are periplasmic; sequence FGGWINGGIRTVLTAAGEK. A helical transmembrane segment spans residues 238 to 258; sequence GALMYAMGIAAATAIDLGGPI. Over 259–276 the chain is Cytoplasmic; the sequence is NKAAGFVAFSFTTDHVLP. A helical membrane pass occupies residues 277–297; sequence VTARSIAIVIPPIGLGLATII. The Periplasmic segment spans residues 298–318; it reads DRRLTGKRLFNAQLYPQGKTA. The chain crosses the membrane as a helical span at residues 319–339; the sequence is MFLAFMGISEGAIPFALESPI. Residues 340–341 are Cytoplasmic-facing; sequence TA. The helical transmembrane segment at 342-362 threads the bilayer; it reads IPSYMVGAIVGSTAAVWLGAV. At 363–378 the chain is on the periplasmic side; sequence QWFPESAIWAWPLVTN. The helical transmembrane segment at 379-399 threads the bilayer; sequence LGVYMAGIALGAIITALMVVF. Residues 400 to 415 are Cytoplasmic-facing; that stretch reads LRLMMFRKGKLLIESL.

The protein localises to the cell inner membrane. Functionally, the phosphoenolpyruvate-dependent sugar phosphotransferase system (PTS), a major carbohydrate active -transport system, catalyzes the phosphorylation of incoming sugar substrates concomitant with their translocation across the cell membrane. The polypeptide is Fructose-like permease IIC component (fryC) (Escherichia coli O6:H1 (strain CFT073 / ATCC 700928 / UPEC)).